We begin with the raw amino-acid sequence, 1462 residues long: NK-tumor recognition protein (1462 aa).

A PPIase cyclophilin-type domain is found at 10–175 (HFDIEINREP…ADVRVIDCGV (166 aa)). 2 disordered regions span residues 187-591 (KKRK…TMAQ) and 607-627 (VIPL…KPWK). Low complexity predominate over residues 198 to 213 (SDSSSNSSSSSESSSE). The segment covering 221-240 (SRRRKHKRRPKVKRSKKRRK) has biased composition (basic residues). Basic and acidic residues-rich tracts occupy residues 241–250 (EASSSEEPRN) and 258–286 (GHSE…RPEE). Residue Lys-323 forms a Glycyl lysine isopeptide (Lys-Gly) (interchain with G-Cter in SUMO2) linkage. A compositionally biased stretch (basic residues) spans 329–345 (SGRKIKGRGTIRYHTPP). 3 positions are modified to phosphoserine: Ser-379, Ser-401, and Ser-416. The segment covering 382 to 402 (KWSKGDKLSDPCSSRWDERSL) has biased composition (basic and acidic residues). Polar residues predominate over residues 403–421 (SQRSRSWSYNGYYSDLSTA). Basic residues predominate over residues 423-459 (HSGHHKKRRKEKKVKHKKKGKKQKHCRRHKQTKKRRI). Ser-463 and Ser-471 each carry phosphoserine. Residues 497–507 (KRDWSKSDKDV) are compositionally biased toward basic and acidic residues. Residues 524–542 (HSQSYSRGSSRSRTASKSS) show a composition bias toward low complexity. Basic residues predominate over residues 543 to 568 (SHSRSRSKSRSSSKSGHRKRASKSPR). Glycyl lysine isopeptide (Lys-Gly) (interchain with G-Cter in SUMO2) cross-links involve residues Lys-578 and Lys-581. At Ser-613 the chain carries Phosphoserine. Residue Lys-639 forms a Glycyl lysine isopeptide (Lys-Gly) (interchain with G-Cter in SUMO2) linkage. Ser-648 is subject to Phosphoserine. Glycyl lysine isopeptide (Lys-Gly) (interchain with G-Cter in SUMO2) cross-links involve residues Lys-656 and Lys-666. Residues 658-1072 (TGSSSSYHKR…EEDLSGKHDT (415 aa)) are disordered. Low complexity-rich tracts occupy residues 699–725 (SRSY…PSSR) and 736–749 (SQCS…SISS). Basic residues predominate over residues 754–774 (RAKRRLRSSGKKNSVSHKKHS). The span at 775–800 (SSSEKTLHSKYVKGRDRSSCVRKYSE) shows a compositional bias: basic and acidic residues. Positions 801–815 (SRSSLDYSSDSEQSS) are enriched in low complexity. 2 stretches are compositionally biased toward basic and acidic residues: residues 823–870 (QEKE…DHLR) and 885–909 (WDSE…SSDK). Residues Ser-866, Ser-887, Ser-889, Ser-891, and Ser-907 each carry the phosphoserine modification. The segment covering 910 to 922 (EEGEATSDSESEV) has biased composition (acidic residues). The segment covering 932–969 (TTKSSTNTSLPDDNGAWKSSKQRTSTSDSEGSCSNSEN) has biased composition (polar residues). Residues 988 to 1013 (EHTKKVKEKLKGKKDKKHKAPKRKQA) show a composition bias toward basic residues. Positions 1022 to 1031 (FGEEEEEEID) are enriched in acidic residues. Residues 1032–1072 (DKQVTQESKEKKVSENNETIKDNILKTEKSSEEDLSGKHDT) are compositionally biased toward basic and acidic residues. Lys-1057 participates in a covalent cross-link: Glycyl lysine isopeptide (Lys-Gly) (interchain with G-Cter in SUMO2). Phosphoserine occurs at positions 1077 and 1146. The interval 1129–1156 (MEICTPDRSSPAKVEETSPLGNARLDTP) is disordered. Thr-1155 carries the phosphothreonine modification. Lys-1163 participates in a covalent cross-link: Glycyl lysine isopeptide (Lys-Gly) (interchain with G-Cter in SUMO2). The interval 1169 to 1215 (EHPQAEVVKQESSMSESKVLGEVGKQDSSSASLASAGESTGKKEVAE) is disordered. Lys-1177 is covalently cross-linked (Glycyl lysine isopeptide (Lys-Gly) (interchain with G-Cter in SUMO1); alternate). Lys-1177 participates in a covalent cross-link: Glycyl lysine isopeptide (Lys-Gly) (interchain with G-Cter in SUMO2); alternate. A Phosphoserine modification is found at Ser-1203. Glycyl lysine isopeptide (Lys-Gly) (interchain with G-Cter in SUMO2) cross-links involve residues Lys-1216, Lys-1225, and Lys-1258. Positions 1251-1462 (LTTVPEMKPQ…RSPSESSRYS (212 aa)) are disordered. The tract at residues 1311–1348 (SRSPSRSRSKSETKSRHRTRSVSYSHSRSRSRSSTSSY) is arg/Ser tandem repeat-rich. Composition is skewed to low complexity over residues 1331–1351 (SVSY…YRSR) and 1359–1376 (RGWY…SYRS). Residues 1377–1388 (YKSHRTSSRSRS) show a composition bias toward basic residues. Over residues 1389–1410 (RSSSYDPHSRSRSYTYDSYYSR) the composition is skewed to low complexity. Residues 1425–1435 (RGRSYNRRSRS) show a composition bias toward basic residues.

Its subcellular location is the cell membrane. It carries out the reaction [protein]-peptidylproline (omega=180) = [protein]-peptidylproline (omega=0). With respect to regulation, inhibited by cyclosporin A (CsA). Functionally, PPIase that catalyzes the cis-trans isomerization of proline imidic peptide bonds in oligopeptides and may therefore assist protein folding. Component of a putative tumor-recognition complex involved in the function of NK cells. The sequence is that of NK-tumor recognition protein from Homo sapiens (Human).